The chain runs to 125 residues: Oxytocin-neurophysin 1 (125 aa).

Residues 1–19 (MAGSSLACCLLGLLALTSA) form the signal peptide. A disulfide bond links cysteine 20 and cysteine 25. Glycine amide is present on glycine 28. Intrachain disulfides connect cysteine 41–cysteine 85, cysteine 44–cysteine 58, cysteine 52–cysteine 75, cysteine 59–cysteine 65, cysteine 92–cysteine 104, cysteine 98–cysteine 116, and cysteine 105–cysteine 110.

It belongs to the vasopressin/oxytocin family. As to quaternary structure, interacts with oxytocin receptor (Ki=1.5 nM). Interacts with vasopressin V1aR/AVPR1A (Ki=37 nM), V1bR/AVPR1B (Ki=222 nM), and V2R/AVPR2 receptors (Ki=823 nM).

It is found in the secreted. In terms of biological role, neurophysin 1 specifically binds oxytocin. Its function is as follows. Oxytocin causes contraction of the smooth muscle of the uterus and of the mammary gland. Acts by binding to oxytocin receptor (OXTR). The chain is Oxytocin-neurophysin 1 (OXT) from Bos taurus (Bovine).